Here is a 343-residue protein sequence, read N- to C-terminus: 3-isopropylmalate dehydrogenase (343 aa).

Arg94, Arg104, Arg128, and Asp218 together coordinate substrate. Asp218, Asp242, and Asp246 together coordinate Mg(2+). NAD(+) is bound at residue 278-290 (GSAPDIAGQNKAN).

Belongs to the isocitrate and isopropylmalate dehydrogenases family. LeuB type 2 subfamily. As to quaternary structure, homodimer. The cofactor is Mg(2+). Mn(2+) serves as cofactor.

It is found in the cytoplasm. It catalyses the reaction (2R,3S)-3-isopropylmalate + NAD(+) = 4-methyl-2-oxopentanoate + CO2 + NADH. Its pathway is amino-acid biosynthesis; L-leucine biosynthesis; L-leucine from 3-methyl-2-oxobutanoate: step 3/4. Functionally, catalyzes the oxidation of 3-carboxy-2-hydroxy-4-methylpentanoate (3-isopropylmalate) to 3-carboxy-4-methyl-2-oxopentanoate. The product decarboxylates to 4-methyl-2 oxopentanoate. This chain is 3-isopropylmalate dehydrogenase, found in Bifidobacterium longum subsp. infantis (strain ATCC 15697 / DSM 20088 / JCM 1222 / NCTC 11817 / S12).